The sequence spans 197 residues: Imidazoleglycerol-phosphate dehydratase (197 aa).

This sequence belongs to the imidazoleglycerol-phosphate dehydratase family.

The protein localises to the cytoplasm. The catalysed reaction is D-erythro-1-(imidazol-4-yl)glycerol 3-phosphate = 3-(imidazol-4-yl)-2-oxopropyl phosphate + H2O. It functions in the pathway amino-acid biosynthesis; L-histidine biosynthesis; L-histidine from 5-phospho-alpha-D-ribose 1-diphosphate: step 6/9. The sequence is that of Imidazoleglycerol-phosphate dehydratase from Laribacter hongkongensis (strain HLHK9).